A 131-amino-acid chain; its full sequence is Small ribosomal subunit protein eS8 (131 aa).

The disordered stretch occupies residues 1 to 37 (MKLGAFYKGGDLKKPSGGKKRRVRRTKKKALGGGPPQ). Residues 16–30 (SGGKKRRVRRTKKKA) show a composition bias toward basic residues.

Belongs to the eukaryotic ribosomal protein eS8 family. As to quaternary structure, part of the 30S ribosomal subunit.

This chain is Small ribosomal subunit protein eS8, found in Pyrobaculum neutrophilum (strain DSM 2338 / JCM 9278 / NBRC 100436 / V24Sta) (Thermoproteus neutrophilus).